A 68-amino-acid polypeptide reads, in one-letter code: Large ribosomal subunit protein bL31 (68 aa).

Positions 16, 18, 36, and 39 each coordinate Zn(2+).

This sequence belongs to the bacterial ribosomal protein bL31 family. Type A subfamily. In terms of assembly, part of the 50S ribosomal subunit. The cofactor is Zn(2+).

Binds the 23S rRNA. The polypeptide is Large ribosomal subunit protein bL31 (Lachnospira eligens (strain ATCC 27750 / DSM 3376 / VPI C15-48 / C15-B4) (Eubacterium eligens)).